The chain runs to 203 residues: GTP cyclohydrolase-2 (203 aa).

49–53 (RIHSE) lines the GTP pocket. Positions 54, 65, and 67 each coordinate Zn(2+). GTP is bound by residues Q70, 92–94 (EGR), and T114. Catalysis depends on D126, which acts as the Proton acceptor. The Nucleophile role is filled by R128. GTP contacts are provided by T149 and K154.

The protein belongs to the GTP cyclohydrolase II family. The cofactor is Zn(2+).

It catalyses the reaction GTP + 4 H2O = 2,5-diamino-6-hydroxy-4-(5-phosphoribosylamino)-pyrimidine + formate + 2 phosphate + 3 H(+). Its pathway is cofactor biosynthesis; riboflavin biosynthesis; 5-amino-6-(D-ribitylamino)uracil from GTP: step 1/4. Its function is as follows. Catalyzes the conversion of GTP to 2,5-diamino-6-ribosylamino-4(3H)-pyrimidinone 5'-phosphate (DARP), formate and pyrophosphate. In Shewanella oneidensis (strain ATCC 700550 / JCM 31522 / CIP 106686 / LMG 19005 / NCIMB 14063 / MR-1), this protein is GTP cyclohydrolase-2.